Consider the following 276-residue polypeptide: Large ribosomal subunit protein uL2 (276 aa).

The disordered stretch occupies residues 208–276 (KAGRNRHRGI…KLIISRRKGK (69 aa)). A compositionally biased stretch (basic and acidic residues) spans 230 to 240 (DHPHGGGEGKK). A compositionally biased stretch (basic residues) spans 255 to 276 (KGAKTRRKKASDKLIISRRKGK).

It belongs to the universal ribosomal protein uL2 family. Part of the 50S ribosomal subunit. Forms a bridge to the 30S subunit in the 70S ribosome.

Its function is as follows. One of the primary rRNA binding proteins. Required for association of the 30S and 50S subunits to form the 70S ribosome, for tRNA binding and peptide bond formation. It has been suggested to have peptidyltransferase activity; this is somewhat controversial. Makes several contacts with the 16S rRNA in the 70S ribosome. The polypeptide is Large ribosomal subunit protein uL2 (Campylobacter lari (strain RM2100 / D67 / ATCC BAA-1060)).